Consider the following 1166-residue polypeptide: Peroxisomal ATPase PEX6 (1166 aa).

This sequence belongs to the AAA ATPase family. Interacts with PEX1; forming the PEX1-PEX6 AAA ATPase complex, which is composed of a heterohexamer formed by a trimer of PEX1-PEX6 dimers.

It is found in the membrane. It carries out the reaction ATP + H2O = ADP + phosphate + H(+). Its function is as follows. Component of the PEX1-PEX6 AAA ATPase complex involved in peroxisome biosynthesis. The complex acts as a protein dislocase complex that mediates the ATP-dependent extraction of the PEX5 receptor from peroxisomal membranes, an essential step for PEX5 recycling. Specifically recognizes PEX5 monoubiquitinated at 'Cys-6', and pulls it out of the peroxisome lumen through the PEX2-PEX10-PEX12 retrotranslocation channel. Extraction by the PEX1-PEX6 AAA ATPase complex is accompanied by unfolding of the TPR repeats and release of bound cargo from PEX5. This Komagataella phaffii (strain GS115 / ATCC 20864) (Yeast) protein is Peroxisomal ATPase PEX6.